Here is a 487-residue protein sequence, read N- to C-terminus: N-succinylglutamate 5-semialdehyde dehydrogenase (487 aa).

221-226 (GSSDTG) contacts NAD(+). Residues glutamate 244 and cysteine 278 contribute to the active site.

It belongs to the aldehyde dehydrogenase family. AstD subfamily.

It carries out the reaction N-succinyl-L-glutamate 5-semialdehyde + NAD(+) + H2O = N-succinyl-L-glutamate + NADH + 2 H(+). It participates in amino-acid degradation; L-arginine degradation via AST pathway; L-glutamate and succinate from L-arginine: step 4/5. Catalyzes the NAD-dependent reduction of succinylglutamate semialdehyde into succinylglutamate. The protein is N-succinylglutamate 5-semialdehyde dehydrogenase of Burkholderia thailandensis (strain ATCC 700388 / DSM 13276 / CCUG 48851 / CIP 106301 / E264).